Here is a 216-residue protein sequence, read N- to C-terminus: Probable nicotinate-nucleotide adenylyltransferase (216 aa).

Belongs to the NadD family.

It carries out the reaction nicotinate beta-D-ribonucleotide + ATP + H(+) = deamido-NAD(+) + diphosphate. Its pathway is cofactor biosynthesis; NAD(+) biosynthesis; deamido-NAD(+) from nicotinate D-ribonucleotide: step 1/1. Catalyzes the reversible adenylation of nicotinate mononucleotide (NaMN) to nicotinic acid adenine dinucleotide (NaAD). This is Probable nicotinate-nucleotide adenylyltransferase from Geobacter sulfurreducens (strain ATCC 51573 / DSM 12127 / PCA).